Reading from the N-terminus, the 398-residue chain is O-methyltransferase aoiO (398 aa).

Aspartate 251 is a binding site for S-adenosyl-L-methionine. Histidine 299 acts as the Proton acceptor in catalysis.

The protein belongs to the class I-like SAM-binding methyltransferase superfamily. Cation-independent O-methyltransferase family.

O-methyltransferase; part of the gene cluster that mediates the biosynthesis of a methylated derivative of known natural products orthosporin and diaporthin. Seems not to be involved in the biosynthesis of the identified final product of the pathway and its function has still to be determined. In Aspergillus oryzae (strain ATCC 42149 / RIB 40) (Yellow koji mold), this protein is O-methyltransferase aoiO.